The sequence spans 405 residues: Cystathionine gamma-lyase (405 aa).

Arginine 62, tyrosine 114, and arginine 119 together coordinate substrate. Lysine 212 bears the N6-(pyridoxal phosphate)lysine mark. Position 339 (glutamate 339) interacts with substrate.

It belongs to the trans-sulfuration enzymes family. Homotetramer. Interacts with CALM in a calcium-dependent manner. It depends on pyridoxal 5'-phosphate as a cofactor.

Its subcellular location is the cytoplasm. The enzyme catalyses L,L-cystathionine + H2O = 2-oxobutanoate + L-cysteine + NH4(+). It carries out the reaction L-cysteine + H2O = hydrogen sulfide + pyruvate + NH4(+) + H(+). The catalysed reaction is L-homocysteine + H2O = 2-oxobutanoate + hydrogen sulfide + NH4(+) + H(+). It catalyses the reaction L-homoserine = 2-oxobutanoate + NH4(+). The enzyme catalyses L-selenocystathionine + H2O = L-selenocysteine + 2-oxobutanoate + NH4(+). It functions in the pathway amino-acid biosynthesis; L-cysteine biosynthesis; L-cysteine from L-homocysteine and L-serine: step 2/2. In terms of biological role, catalyzes the last step in the trans-sulfuration pathway from L-methionine to L-cysteine in a pyridoxal-5'-phosphate (PLP)-dependent manner, which consists on cleaving the L,L-cystathionine molecule into L-cysteine, ammonia and 2-oxobutanoate. Part of the L-cysteine derived from the trans-sulfuration pathway is utilized for biosynthesis of the ubiquitous antioxidant glutathione. Besides its role in the conversion of L-cystathionine into L-cysteine, it utilizes L-cysteine and L-homocysteine as substrates (at much lower rates than L,L-cystathionine) to produce hydrogen sulfide (H2S). In vitro, it converts two L-cysteine molecules into lanthionine and H2S, and two L-homocysteine molecules to homolanthionine and H2S, which can be particularly relevant under conditions of severe hyperhomocysteinemia. Lanthionine and homolanthionine are structural homologs of L,L-cystathionine that differ by the absence or presence of an extra methylene group, respectively. Acts as a cysteine-protein sulfhydrase by mediating sulfhydration of target proteins: sulfhydration consists of converting -SH groups into -SSH on specific cysteine residues of target proteins such as GAPDH, PTPN1 and NF-kappa-B subunit RELA, thereby regulating their function. By generating the gasotransmitter H2S, it participates in a number of physiological processes such as vasodilation, bone protection, and inflammation. Plays an essential role in myogenesis by contributing to the biogenesis of H2S in skeletal muscle tissue. Can also accept homoserine as substrate. Catalyzes the elimination of selenocystathionine (which can be derived from the diet) to yield selenocysteine, ammonia and 2-oxobutanoate. This Sus scrofa (Pig) protein is Cystathionine gamma-lyase (CTH).